We begin with the raw amino-acid sequence, 342 residues long: Methionyl-tRNA formyltransferase (342 aa).

Residue 119–122 (SILP) participates in (6S)-5,6,7,8-tetrahydrofolate binding.

This sequence belongs to the Fmt family.

The enzyme catalyses L-methionyl-tRNA(fMet) + (6R)-10-formyltetrahydrofolate = N-formyl-L-methionyl-tRNA(fMet) + (6S)-5,6,7,8-tetrahydrofolate + H(+). Attaches a formyl group to the free amino group of methionyl-tRNA(fMet). The formyl group appears to play a dual role in the initiator identity of N-formylmethionyl-tRNA by promoting its recognition by IF2 and preventing the misappropriation of this tRNA by the elongation apparatus. This chain is Methionyl-tRNA formyltransferase, found in Nostoc sp. (strain PCC 7120 / SAG 25.82 / UTEX 2576).